The primary structure comprises 119 residues: MIRGVGIDSVEVERMKKIVEKGDKFAKRVLTPKEFEQYQQLKGKRKVEYLGGRFSLKESFSKAMGTGLGKYVGFQDIETLWDDLGHPVMTSTKFSGNIFPSITHDDHEIITVVVLEELN.

Mg(2+) is bound by residues aspartate 8 and glutamate 58.

It belongs to the P-Pant transferase superfamily. AcpS family. The cofactor is Mg(2+).

The protein localises to the cytoplasm. It carries out the reaction apo-[ACP] + CoA = holo-[ACP] + adenosine 3',5'-bisphosphate + H(+). Functionally, transfers the 4'-phosphopantetheine moiety from coenzyme A to a Ser of acyl-carrier-protein. The chain is Holo-[acyl-carrier-protein] synthase from Lactobacillus johnsonii (strain CNCM I-12250 / La1 / NCC 533).